Consider the following 668-residue polypeptide: Transketolase 1 (668 aa).

His-26 is a substrate binding site. Thiamine diphosphate contacts are provided by residues His-66 and 114–116 (GPL). Asp-155 provides a ligand contact to Mg(2+). 2 residues coordinate thiamine diphosphate: Gly-156 and Asn-185. Mg(2+) is bound by residues Asn-185 and Ile-187. Positions 261, 358, and 385 each coordinate substrate. Position 261 (His-261) interacts with thiamine diphosphate. Glu-413 functions as the Proton donor in the catalytic mechanism. Phe-439 provides a ligand contact to thiamine diphosphate. Residues His-463, Asp-471, and Arg-522 each contribute to the substrate site.

It belongs to the transketolase family. In terms of assembly, homodimer. The cofactor is Mg(2+). Ca(2+) serves as cofactor. It depends on Mn(2+) as a cofactor. Co(2+) is required as a cofactor. Requires thiamine diphosphate as cofactor.

The enzyme catalyses D-sedoheptulose 7-phosphate + D-glyceraldehyde 3-phosphate = aldehydo-D-ribose 5-phosphate + D-xylulose 5-phosphate. Catalyzes the transfer of a two-carbon ketol group from a ketose donor to an aldose acceptor, via a covalent intermediate with the cofactor thiamine pyrophosphate. This Pasteurella multocida (strain Pm70) protein is Transketolase 1 (tktA).